Reading from the N-terminus, the 334-residue chain is Holliday junction branch migration complex subunit RuvB (334 aa).

Residues 4 to 184 (ADRLIAADAQ…FGIVQRLEFY (181 aa)) are large ATPase domain (RuvB-L). ATP is bound by residues I23, R24, G65, K68, T69, T70, 131–133 (EDY), R174, Y184, and R221. Mg(2+) is bound at residue T69. Residues 185–255 (QVADLQHIVG…VAAQALNMLD (71 aa)) are small ATPAse domain (RuvB-S). Positions 258 to 334 (AAGFDYMDRK…YQHFGIDRAE (77 aa)) are head domain (RuvB-H). DNA contacts are provided by R294, R313, and R318.

This sequence belongs to the RuvB family. As to quaternary structure, homohexamer. Forms an RuvA(8)-RuvB(12)-Holliday junction (HJ) complex. HJ DNA is sandwiched between 2 RuvA tetramers; dsDNA enters through RuvA and exits via RuvB. An RuvB hexamer assembles on each DNA strand where it exits the tetramer. Each RuvB hexamer is contacted by two RuvA subunits (via domain III) on 2 adjacent RuvB subunits; this complex drives branch migration. In the full resolvosome a probable DNA-RuvA(4)-RuvB(12)-RuvC(2) complex forms which resolves the HJ.

Its subcellular location is the cytoplasm. It carries out the reaction ATP + H2O = ADP + phosphate + H(+). Its function is as follows. The RuvA-RuvB-RuvC complex processes Holliday junction (HJ) DNA during genetic recombination and DNA repair, while the RuvA-RuvB complex plays an important role in the rescue of blocked DNA replication forks via replication fork reversal (RFR). RuvA specifically binds to HJ cruciform DNA, conferring on it an open structure. The RuvB hexamer acts as an ATP-dependent pump, pulling dsDNA into and through the RuvAB complex. RuvB forms 2 homohexamers on either side of HJ DNA bound by 1 or 2 RuvA tetramers; 4 subunits per hexamer contact DNA at a time. Coordinated motions by a converter formed by DNA-disengaged RuvB subunits stimulates ATP hydrolysis and nucleotide exchange. Immobilization of the converter enables RuvB to convert the ATP-contained energy into a lever motion, pulling 2 nucleotides of DNA out of the RuvA tetramer per ATP hydrolyzed, thus driving DNA branch migration. The RuvB motors rotate together with the DNA substrate, which together with the progressing nucleotide cycle form the mechanistic basis for DNA recombination by continuous HJ branch migration. Branch migration allows RuvC to scan DNA until it finds its consensus sequence, where it cleaves and resolves cruciform DNA. The polypeptide is Holliday junction branch migration complex subunit RuvB (Edwardsiella ictaluri (strain 93-146)).